We begin with the raw amino-acid sequence, 291 residues long: uncharacterized protein (291 aa).

Helical transmembrane passes span 5–23 (ILLSLSASVLFGYLYYFST), 33–52 (IFGFRIIFTLPFVIAAVFLF), 69–91 (PLLIFGFLFNSAMMGIQIWLFLW), 101–120 (VSFGYLLLPLTMVLVGRLVF), 127–144 (VKFLAVVIAAIGVFSNIL), 148–165 (GLSWEALLVSFGYSTYFA), 172–194 (INDLAGFCLEMSLLLPVCIYFAW), 209–228 (LLLLVLLGLISGVALNTYIV), 235–257 (INVLGLLGYAEPIMMLFVSFLIG), and 262–284 (SETIPLFICLMISMILFMSEGLV).

It belongs to the EamA transporter family.

Its subcellular location is the cell membrane. This is an uncharacterized protein from Pasteurella multocida (strain Pm70).